A 429-amino-acid polypeptide reads, in one-letter code: tRNA threonylcarbamoyladenosine dehydratase 1 (429 aa).

A run of 2 helical transmembrane segments spans residues 3-23 and 74-94; these read NNTW…TQLA and EQYI…TMLI. S259 is modified (phosphoserine). Residues 279–299 form a helical membrane-spanning segment; the sequence is LPELGTMPGIFGLSIATWILT.

This sequence belongs to the HesA/MoeB/ThiF family.

The protein resides in the mitochondrion outer membrane. Functionally, catalyzes the ATP-dependent dehydration of threonylcarbamoyladenosine at position 37 (t(6)A37) to form cyclic t(6)A37 (ct(6)A37) in tRNAs that read codons beginning with adenine. The protein is tRNA threonylcarbamoyladenosine dehydratase 1 (TCD1) of Saccharomyces cerevisiae (strain ATCC 204508 / S288c) (Baker's yeast).